The primary structure comprises 446 residues: O-antigen polymerase (446 aa).

11 helical membrane passes run 11–31 (ICSY…VINE), 33–53 (FCEI…VIII), 58–78 (QGGF…FILI), 104–124 (IYVF…VLLY), 147–167 (QLSM…IKSY), 186–206 (LYDE…SLLF), 211–231 (NFIL…LVGL), 252–272 (LKIK…SLFL), 355–375 (IYLG…SLAF), 391–411 (KLAY…IYFA), and 415–435 (LFDF…LSIV).

The protein localises to the cell inner membrane. It carries out the reaction n lipid-linked O-antigen repeat units = a lipid-linked O antigen + (n-1) polyisoprenyl diphosphate.. It functions in the pathway bacterial outer membrane biogenesis; LPS O-antigen biosynthesis. Its function is as follows. Polymerase involved in the biosynthesis of the lipopolysaccharide (LPS). Catalyzes the polymerization of the O-antigen repeat units on the periplasmic face of the inner membrane, leading to the formation of the lipid-linked O-antigen molecule. In vitro, shows a preference for bacteria-based, undecaprenyl-containing substrates rather than eukaryote-based, dolichol-containing substrates. The protein is O-antigen polymerase of Escherichia coli.